We begin with the raw amino-acid sequence, 329 residues long: Biotin--protein ligase 2 (329 aa).

Residues 67-251 enclose the BPL/LPL catalytic domain; that stretch reads ISTHRFGRFL…KFENFFDLFM (185 aa). Biotin-binding positions include 84–85, Gln-107, 111–113, and Lys-182; these read ST and RGR.

It belongs to the biotin--protein ligase family. As to expression, highly expressed in seeds. Expressed in roots, leaves, stems, flowers and siliques.

The protein localises to the cytoplasm. Seems to have no or limited implication in biotin-dependent carboxylase biotinylation in planta. The sequence is that of Biotin--protein ligase 2 (HCS2) from Arabidopsis thaliana (Mouse-ear cress).